The primary structure comprises 91 residues: Sec-independent protein translocase protein TatA (91 aa).

The helical transmembrane segment at M1 to G21 threads the bilayer.

It belongs to the TatA/E family. The Tat system comprises two distinct complexes: a TatABC complex, containing multiple copies of TatA, TatB and TatC subunits, and a separate TatA complex, containing only TatA subunits. Substrates initially bind to the TatABC complex, which probably triggers association of the separate TatA complex to form the active translocon.

The protein localises to the cell membrane. Part of the twin-arginine translocation (Tat) system that transports large folded proteins containing a characteristic twin-arginine motif in their signal peptide across membranes. TatA could form the protein-conducting channel of the Tat system. In Rhodococcus erythropolis (strain PR4 / NBRC 100887), this protein is Sec-independent protein translocase protein TatA.